A 1291-amino-acid chain; its full sequence is GRB10-interacting GYF protein 2 (1291 aa).

Residue A2 is modified to N-acetylalanine. Phosphoserine is present on residues S19, S26, and S30. Omega-N-methylarginine is present on residues R107, R119, and R121. The segment at 112–132 (GTVVGAPRGRSSSRGRGRGRG) is disordered. S140 is modified (phosphoserine). 3 disordered regions span residues 148-196 (FGRG…RKHE), 209-248 (REEQ…GWRE), and 267-484 (RGYR…TEPD). R150 is modified (omega-N-methylarginine). The span at 152-183 (GGREMHRSQSWEERGDRRFEKPGRKDVGRPNF) shows a compositional bias: basic and acidic residues. A phosphoserine mark is found at S161, S190, and S237. A compositionally biased stretch (basic and acidic residues) spans 226-248 (SRRDGERWRPHSPDGPRSTGWRE). Residues 281–311 (DDRDSLPEWCLEDAEEEMGTFDSSGAFLSLK) carry the DDX6 binding motif motif. A compositionally biased stretch (acidic residues) spans 290 to 299 (CLEDAEEEMG). Over residues 313-364 (VQKEPIPEEQEMDFRPVEEGEERSDSDSSHNEEAKEPDKTNRREGEKTDRAG) the composition is skewed to basic and acidic residues. Residues 371-393 (VPQTSLSSARPGTPSDHQPQEAT) are compositionally biased toward polar residues. Position 383 is a phosphothreonine (T383). Residues 394–415 (QFERKDEPKAEQVEKAEEENRS) are compositionally biased toward basic and acidic residues. The 49-residue stretch at 534 to 582 (MQKWYYKDPQGEIQGPFNNQEMAEWFQAGYFTMSLLVKRACDESFQPLG) folds into the GYF domain. A required for GRB10-binding region spans residues 548 to 564 (GPFNNQEMAEWFQAGYF). S594 is modified (phosphoserine). Disordered regions lie at residues 732-794 (KAKA…QEEA), 846-937 (EEAA…SNTA), 958-998 (ERQL…SKPA), 1011-1053 (EARQ…SVWG), and 1090-1118 (KEVG…NRQN). The span at 846-898 (EEAAKWAREEEEAQRRLEENRLRMEEEAARLRHEEEERKRKELELQRQKDLMR) shows a compositional bias: basic and acidic residues. Residues 899 to 924 (QRQQQQEALRRLQQQQQQQQLAQMKL) are compositionally biased toward low complexity. Residues 925–937 (PSSSTWGQQSNTA) are compositionally biased toward polar residues. The segment covering 958–973 (ERQLREEQRRQQRELM) has biased composition (basic and acidic residues). Positions 977–986 (QQQQQQQQQQ) are enriched in low complexity. S995 is subject to Phosphoserine. Residues 1015–1031 (MQKQQQQQQQQQQQHQQ) are compositionally biased toward low complexity. Polar residues predominate over residues 1032-1053 (SNRARNSTHSNLHTSLGNSVWG). Low complexity predominate over residues 1096-1110 (NSTNKNKNNASLSKS). K1129 is covalently cross-linked (Glycyl lysine isopeptide (Lys-Gly) (interchain with G-Cter in SUMO2)). 2 disordered regions span residues 1202–1223 (AKQK…QDSV) and 1239–1263 (QSNN…KMVR). Over residues 1208 to 1220 (QQRQQQQQQQQQQ) the composition is skewed to low complexity. Phosphoserine is present on S1276.

It belongs to the GIGYF family. As to quaternary structure, component of the 4EHP-GYF2 complex, at least composed of EIF4E2, GIGYF2 and ZNF598. Interacts (via the 4EHP-binding motif) with EIF4E2; the interaction is direct. Interacts with ZFP36/TTP (via P-P-P-P-G repeats); the interaction is direct. Interacts with GRB10. Interacts (via DDX6 motif) with DDX6 (via RecA-like domain 2). As to expression, expressed in heart, liver, kidney and brain as well as in testis.

Functionally, key component of the 4EHP-GYF2 complex, a multiprotein complex that acts as a repressor of translation initiation. In the 4EHP-GYF2 complex, acts as a factor that bridges EIF4E2 to ZFP36/TTP, linking translation repression with mRNA decay. Also recruits and bridges the association of the 4EHP complex with the decapping effector protein DDX6, which is required for the ZFP36/TTP-mediated down-regulation of AU-rich mRNA. May act cooperatively with GRB10 to regulate tyrosine kinase receptor signaling, including IGF1 and insulin receptors. In association with EIF4E2, assists ribosome-associated quality control (RQC) by sequestering the mRNA cap, blocking ribosome initiation and decreasing the translational load on problematic messages. Part of a pathway that works in parallel to RQC-mediated degradation of the stalled nascent polypeptide. GIGYF2 and EIF4E2 work downstream and independently of ZNF598, which seems to work as a scaffold that can recruit them to faulty mRNA even if alternative recruitment mechanisms may exist. The protein is GRB10-interacting GYF protein 2 of Mus musculus (Mouse).